The primary structure comprises 494 residues: Guanosine-5'-triphosphate,3'-diphosphate pyrophosphatase (494 aa).

Belongs to the GppA/Ppx family. GppA subfamily.

It catalyses the reaction guanosine 3'-diphosphate 5'-triphosphate + H2O = guanosine 3',5'-bis(diphosphate) + phosphate + H(+). The protein operates within purine metabolism; ppGpp biosynthesis; ppGpp from GTP: step 2/2. In terms of biological role, catalyzes the conversion of pppGpp to ppGpp. Guanosine pentaphosphate (pppGpp) is a cytoplasmic signaling molecule which together with ppGpp controls the 'stringent response', an adaptive process that allows bacteria to respond to amino acid starvation, resulting in the coordinated regulation of numerous cellular activities. The sequence is that of Guanosine-5'-triphosphate,3'-diphosphate pyrophosphatase from Escherichia coli O6:H1 (strain CFT073 / ATCC 700928 / UPEC).